The following is a 311-amino-acid chain: Phospho-N-acetylmuramoyl-pentapeptide-transferase (311 aa).

10 helical membrane-spanning segments follow: residues 2 to 22 (ENNV…IEGF), 48 to 68 (GTPT…LLNF), 74 to 94 (SFLI…DDFM), 104 to 124 (ITAV…VYFI), 144 to 164 (LGWF…NAVN), 168 to 188 (GVDG…LIVG), 192 to 212 (VVYL…WHPA), 214 to 234 (IFMG…SFAL), 237 to 257 (LELF…SVII), and 288 to 308 (KIAF…IIGW).

Belongs to the glycosyltransferase 4 family. MraY subfamily. The cofactor is Mg(2+).

The protein resides in the cell inner membrane. It catalyses the reaction UDP-N-acetyl-alpha-D-muramoyl-L-alanyl-gamma-D-glutamyl-meso-2,6-diaminopimeloyl-D-alanyl-D-alanine + di-trans,octa-cis-undecaprenyl phosphate = di-trans,octa-cis-undecaprenyl diphospho-N-acetyl-alpha-D-muramoyl-L-alanyl-D-glutamyl-meso-2,6-diaminopimeloyl-D-alanyl-D-alanine + UMP. It participates in cell wall biogenesis; peptidoglycan biosynthesis. Functionally, catalyzes the initial step of the lipid cycle reactions in the biosynthesis of the cell wall peptidoglycan: transfers peptidoglycan precursor phospho-MurNAc-pentapeptide from UDP-MurNAc-pentapeptide onto the lipid carrier undecaprenyl phosphate, yielding undecaprenyl-pyrophosphoryl-MurNAc-pentapeptide, known as lipid I. The polypeptide is Phospho-N-acetylmuramoyl-pentapeptide-transferase (Kosmotoga olearia (strain ATCC BAA-1733 / DSM 21960 / TBF 19.5.1)).